The chain runs to 143 residues: MSLSAKDMAVVKGFWNKIAPKADEIGGEALGRMLRVFPQTKAYFAHWKDTSPNSPEVKKHGALILATIGDVVNRIENMTTVLGSLSDLHAFKLRVDPANFKILGHNIMVVICMTFPNDFTPEVHLSVDKFFQNFTLALSERYR.

Position 2 is an N-acetylserine (Ser2). Residues 2 to 143 (SLSAKDMAVV…FTLALSERYR (142 aa)) enclose the Globin domain. Residue His60 coordinates O2. His89 lines the heme b pocket.

This sequence belongs to the globin family. As to quaternary structure, heterotetramer of two alpha chains and two beta chains. In terms of tissue distribution, red blood cells.

Involved in oxygen transport from gills to the various peripheral tissues. This chain is Hemoglobin anodic subunit alpha (hba), found in Anguilla anguilla (European freshwater eel).